A 220-amino-acid polypeptide reads, in one-letter code: Octanoyltransferase (220 aa).

One can recognise a BPL/LPL catalytic domain in the interval 31 to 217 (ENTPDEIWLV…HFAEILGYNA (187 aa)). Residues 70-77 (RGGQITYH), 146-148 (SLG), and 159-161 (GLA) contribute to the substrate site. The active-site Acyl-thioester intermediate is Cys-177.

It belongs to the LipB family.

Its subcellular location is the cytoplasm. The enzyme catalyses octanoyl-[ACP] + L-lysyl-[protein] = N(6)-octanoyl-L-lysyl-[protein] + holo-[ACP] + H(+). It participates in protein modification; protein lipoylation via endogenous pathway; protein N(6)-(lipoyl)lysine from octanoyl-[acyl-carrier-protein]: step 1/2. Functionally, catalyzes the transfer of endogenously produced octanoic acid from octanoyl-acyl-carrier-protein onto the lipoyl domains of lipoate-dependent enzymes. Lipoyl-ACP can also act as a substrate although octanoyl-ACP is likely to be the physiological substrate. This chain is Octanoyltransferase, found in Actinobacillus succinogenes (strain ATCC 55618 / DSM 22257 / CCUG 43843 / 130Z).